Consider the following 106-residue polypeptide: Putative double-stranded DNA mimic protein VV1_3059 (106 aa).

The protein belongs to the putative dsDNA mimic protein family.

Functionally, may act as a double-stranded DNA (dsDNA) mimic. Probably regulates the activity of a dsDNA-binding protein. This chain is Putative double-stranded DNA mimic protein VV1_3059, found in Vibrio vulnificus (strain CMCP6).